Here is a 467-residue protein sequence, read N- to C-terminus: Probable citrate synthase 2, mitochondrial (467 aa).

Active-site residues include His303, His349, and Asp404.

This sequence belongs to the citrate synthase family. In terms of assembly, homodimer.

It is found in the mitochondrion matrix. It catalyses the reaction oxaloacetate + acetyl-CoA + H2O = citrate + CoA + H(+). The protein operates within carbohydrate metabolism; tricarboxylic acid cycle; isocitrate from oxaloacetate: step 1/2. This chain is Probable citrate synthase 2, mitochondrial, found in Aedes aegypti (Yellowfever mosquito).